Here is a 423-residue protein sequence, read N- to C-terminus: Glutamyl-tRNA reductase (423 aa).

Substrate contacts are provided by residues 49-52 (TCNR), S109, 114-116 (EGQ), and Q120. The active-site Nucleophile is C50. 189-194 (GAGETG) provides a ligand contact to NADP(+).

This sequence belongs to the glutamyl-tRNA reductase family. Homodimer.

The enzyme catalyses (S)-4-amino-5-oxopentanoate + tRNA(Glu) + NADP(+) = L-glutamyl-tRNA(Glu) + NADPH + H(+). It functions in the pathway porphyrin-containing compound metabolism; protoporphyrin-IX biosynthesis; 5-aminolevulinate from L-glutamyl-tRNA(Glu): step 1/2. Its pathway is porphyrin-containing compound metabolism; chlorophyll biosynthesis. Catalyzes the NADPH-dependent reduction of glutamyl-tRNA(Glu) to glutamate 1-semialdehyde (GSA). The protein is Glutamyl-tRNA reductase of Chlorobium limicola (strain DSM 245 / NBRC 103803 / 6330).